We begin with the raw amino-acid sequence, 208 residues long: Thymidylate kinase (208 aa).

Residue 10–17 (GPEGSGKT) participates in ATP binding.

The protein belongs to the thymidylate kinase family.

The enzyme catalyses dTMP + ATP = dTDP + ADP. Phosphorylation of dTMP to form dTDP in both de novo and salvage pathways of dTTP synthesis. This Bacillus cereus (strain ATCC 10987 / NRS 248) protein is Thymidylate kinase.